A 424-amino-acid chain; its full sequence is Serine--tRNA ligase (424 aa).

L-serine is bound at residue 230–232; that stretch reads TAE. 261–263 provides a ligand contact to ATP; that stretch reads RAE. An L-serine-binding site is contributed by glutamate 284. An ATP-binding site is contributed by 348–351; that stretch reads EISS. Residue serine 384 participates in L-serine binding.

The protein belongs to the class-II aminoacyl-tRNA synthetase family. Type-1 seryl-tRNA synthetase subfamily. In terms of assembly, homodimer. The tRNA molecule binds across the dimer.

It localises to the cytoplasm. It catalyses the reaction tRNA(Ser) + L-serine + ATP = L-seryl-tRNA(Ser) + AMP + diphosphate + H(+). It carries out the reaction tRNA(Sec) + L-serine + ATP = L-seryl-tRNA(Sec) + AMP + diphosphate + H(+). It participates in aminoacyl-tRNA biosynthesis; selenocysteinyl-tRNA(Sec) biosynthesis; L-seryl-tRNA(Sec) from L-serine and tRNA(Sec): step 1/1. In terms of biological role, catalyzes the attachment of serine to tRNA(Ser). Is also able to aminoacylate tRNA(Sec) with serine, to form the misacylated tRNA L-seryl-tRNA(Sec), which will be further converted into selenocysteinyl-tRNA(Sec). This Desulforamulus reducens (strain ATCC BAA-1160 / DSM 100696 / MI-1) (Desulfotomaculum reducens) protein is Serine--tRNA ligase.